Consider the following 261-residue polypeptide: High-affinity zinc uptake system membrane protein ZnuB (261 aa).

7 consecutive transmembrane segments (helical) span residues 8 to 28 (ALLTGIVLSLITAPLGVFVVW), 54 to 74 (VNPYIAIVVLTLILAIAMVWL), 84 to 104 (TLLGIIAHSCLSLGVVTVGLL), 125 to 145 (TDLIYIGIGVIIVLSTLIYFW), 171 to 191 (ILMILTALTIALSMKFVGALI), 214 to 234 (VGWAIIMSMLSIIGGLILSAF), and 236 to 256 (DTAAGPSVVICSAFLFVLSLF).

The protein belongs to the ABC-3 integral membrane protein family.

The protein resides in the cell inner membrane. In terms of biological role, involved in the high-affinity zinc uptake transport system. The sequence is that of High-affinity zinc uptake system membrane protein ZnuB (znuB) from Haemophilus influenzae (strain ATCC 51907 / DSM 11121 / KW20 / Rd).